The following is a 156-amino-acid chain: tRNA (cytidine(34)-2'-O)-methyltransferase (156 aa).

S-adenosyl-L-methionine contacts are provided by glycine 102, leucine 124, and serine 132.

The protein belongs to the class IV-like SAM-binding methyltransferase superfamily. RNA methyltransferase TrmH family. TrmL subfamily. In terms of assembly, homodimer.

The protein localises to the cytoplasm. It catalyses the reaction cytidine(34) in tRNA + S-adenosyl-L-methionine = 2'-O-methylcytidine(34) in tRNA + S-adenosyl-L-homocysteine + H(+). The catalysed reaction is 5-carboxymethylaminomethyluridine(34) in tRNA(Leu) + S-adenosyl-L-methionine = 5-carboxymethylaminomethyl-2'-O-methyluridine(34) in tRNA(Leu) + S-adenosyl-L-homocysteine + H(+). In terms of biological role, methylates the ribose at the nucleotide 34 wobble position in the two leucyl isoacceptors tRNA(Leu)(CmAA) and tRNA(Leu)(cmnm5UmAA). Catalyzes the methyl transfer from S-adenosyl-L-methionine to the 2'-OH of the wobble nucleotide. This chain is tRNA (cytidine(34)-2'-O)-methyltransferase, found in Burkholderia ambifaria (strain ATCC BAA-244 / DSM 16087 / CCUG 44356 / LMG 19182 / AMMD) (Burkholderia cepacia (strain AMMD)).